The sequence spans 123 residues: ATP synthase epsilon chain (123 aa).

Belongs to the ATPase epsilon chain family. In terms of assembly, F-type ATPases have 2 components, CF(1) - the catalytic core - and CF(0) - the membrane proton channel. CF(1) has five subunits: alpha(3), beta(3), gamma(1), delta(1), epsilon(1). CF(0) has three main subunits: a, b and c.

Its subcellular location is the cell membrane. Produces ATP from ADP in the presence of a proton gradient across the membrane. This is ATP synthase epsilon chain from Corynebacterium diphtheriae (strain ATCC 700971 / NCTC 13129 / Biotype gravis).